A 313-amino-acid polypeptide reads, in one-letter code: WUSCHEL-related homeobox 5 (313 aa).

A disordered region spans residues 1 to 32 (METTTTTLGGGGGGRAGGFSDPPSPLSPPLSP). Residues 8-17 (LGGGGGGRAG) are compositionally biased toward gly residues. Residues 22–31 (PPSPLSPPLS) show a composition bias toward pro residues. Residues 40-104 (LANARWTPTK…NHKARQRQKQ (65 aa)) constitute a DNA-binding region (homeobox; WUS-type). 2 disordered regions span residues 224–247 (AAGRGAAEAEGHGRRGGGAGGRET) and 271–313 (CAAV…SGGR). Over residues 271–301 (CAAVSPTTPSASASFSWESESSDSPSSEAPP) the composition is skewed to low complexity.

It belongs to the WUS homeobox family.

It is found in the nucleus. In terms of biological role, transcription factor which may be involved in developmental processes. The protein is WUSCHEL-related homeobox 5 (WOX5) of Oryza sativa subsp. japonica (Rice).